The primary structure comprises 425 residues: Rho GTPase-activating protein 8 (425 aa).

The 156-residue stretch at 13–168 folds into the CRAL-TRIO domain; that stretch reads PFYDVARHGI…EVVRYDEKLQ (156 aa). The tract at residues 169–192 is disordered; it reads NLHKGQPPPPTKTPPPRPPLPTQQ. Residues 174-189 are compositionally biased toward pro residues; it reads QPPPPTKTPPPRPPLP. Residues 195-381 enclose the Rho-GAP domain; the sequence is VSLQYLRDKN…LLIEYYDKVF (187 aa).

In terms of tissue distribution, highly expressed in skeletal muscle, lung and testis, and at lower levels in kidney, stomach and colon. Not detected in heart, liver, spleen, breast, brain, neonatal head or pancreas.

In terms of biological role, GTPase activator for the Rho-type GTPases by converting them to an inactive GDP-bound state. The chain is Rho GTPase-activating protein 8 (Arhgap8) from Mus musculus (Mouse).